Here is a 541-residue protein sequence, read N- to C-terminus: Formimidoyltransferase-cyclodeaminase (541 aa).

Positions 1–181 (MSQLVECVPN…GATVTGARKF (181 aa)) are formiminotransferase N-subdomain. The For formimidoyltransferase activity role is filled by H82. 163–172 (GPSSFVPSWG) lines the folate pocket. Residues 182–326 (LIAFNINLLS…PKERIIEYLV (145 aa)) form a formiminotransferase C-subdomain region. The segment at 327–334 (PDSGPEQS) is linker. The segment at 335 to 541 (LLDASLRAFV…VLGSLEARKE (207 aa)) is cyclodeaminase/cyclohydrolase. D412 acts as the For cyclodeaminase activity in catalysis. S520 carries the post-translational modification Phosphoserine.

In the C-terminal section; belongs to the cyclodeaminase/cyclohydrolase family. The protein in the N-terminal section; belongs to the formiminotransferase family. As to quaternary structure, homooctamer, including four polyglutamate binding sites. The subunits are arranged as a tetramer of dimers, and form a planar ring-shaped structure. As to expression, specifically expressed in liver (at protein level).

It localises to the cytoplasm. The protein resides in the cytosol. It is found in the golgi apparatus. Its subcellular location is the cytoskeleton. The protein localises to the microtubule organizing center. It localises to the centrosome. The protein resides in the centriole. It catalyses the reaction 5-formimidoyltetrahydrofolate + L-glutamate = N-formimidoyl-L-glutamate + (6S)-5,6,7,8-tetrahydrofolate. The enzyme catalyses 5-formimidoyltetrahydrofolate + 2 H(+) = (6R)-5,10-methenyltetrahydrofolate + NH4(+). It participates in amino-acid degradation; L-histidine degradation into L-glutamate; L-glutamate from N-formimidoyl-L-glutamate (transferase route): step 1/1. In terms of biological role, folate-dependent enzyme, that displays both transferase and deaminase activity. Serves to channel one-carbon units from formiminoglutamate to the folate pool. Functionally, binds and promotes bundling of vimentin filaments originating from the Golgi. The sequence is that of Formimidoyltransferase-cyclodeaminase (Ftcd) from Rattus norvegicus (Rat).